The following is a 206-amino-acid chain: Venom allergen 5 (206 aa).

Intrachain disulfides connect cysteine 5–cysteine 18, cysteine 9–cysteine 103, cysteine 28–cysteine 96, and cysteine 172–cysteine 189. Positions 47 to 191 (LKVHNDFRQK…WYTHYLVCNY (145 aa)) constitute an SCP domain.

Belongs to the CRISP family. Venom allergen 5-like subfamily. Expressed by the venom gland.

Its subcellular location is the secreted. This is Venom allergen 5 from Vespula vidua (Ground hornet).